The primary structure comprises 130 residues: Acyl carrier protein 2, chloroplastic (130 aa).

The transit peptide at 1–48 directs the protein to the chloroplast; that stretch reads MASITGSSVSFKCAPLQSSFNSKNYALKSSVTFWRRTPVMPRGLSVSC. In terms of domain architecture, Carrier spans 52–127; sequence PEMVTKVSDI…EAADMIEALQ (76 aa). Ser-87 bears the O-(pantetheine 4'-phosphoryl)serine mark.

The protein belongs to the acyl carrier protein (ACP) family. In terms of processing, 4'-phosphopantetheine is transferred from CoA to a specific serine of apo-ACP by acpS. This modification is essential for activity because fatty acids are bound in thioester linkage to the sulfhydryl of the prosthetic group. In terms of tissue distribution, roots, leaves and seeds.

It localises to the plastid. It is found in the chloroplast. It participates in lipid metabolism; fatty acid biosynthesis. Its function is as follows. Carrier of the growing fatty acid chain in fatty acid biosynthesis. This is Acyl carrier protein 2, chloroplastic (ACL1.2) from Spinacia oleracea (Spinach).